The primary structure comprises 259 residues: Short-chain dehydrogenase chry4 (259 aa).

Residues Arg37, Asp55, Asn81, Tyr154, Lys158, Val185, and Thr187 each contribute to the NADP(+) site. Residue Tyr154 is the Proton donor of the active site. Catalysis depends on Lys158, which acts as the Lowers pKa of active site Tyr.

The protein belongs to the short-chain dehydrogenases/reductases (SDR) family.

The protein operates within pigment biosynthesis. Short-chain dehydrogenase; part of the gene cluster that mediates the biosynthesis of the yellow pigment chrysogine. Pyruvic acid and anthranilic acid are likely substrates for the nonribosomal peptide synthetase chry1/NRPS14, with pyruvic acid adenylated by the first A domain and anthranilic acid by the second. If pyruvic acid and anthranilic acid are merged and released from chry1/NRPS14 by hydrolysis, a subsequent amidation would lead to 2-pyruvoylaminobenzamide. This process is probably catalyzed by the amidotransferase chry2 using glutamine as amino donor. The dehydrogenase chry5 that has a terminal berberine bridge domain for C-N cyclization could catalyze the cyclization of 2-pyruvoylaminobenzamide to yield acetyl-4(3H)-quinazolidinone. A final reduction of acetyl-4(3H)-quinazolidinone catalyzed by the oxidoreductase chry4 would result in chrysogine. The chain is Short-chain dehydrogenase chry4 from Gibberella zeae (strain ATCC MYA-4620 / CBS 123657 / FGSC 9075 / NRRL 31084 / PH-1) (Wheat head blight fungus).